The following is a 647-amino-acid chain: A-type voltage-gated potassium channel KCND1 (647 aa).

Residues 1 to 183 (MAAGLATWLP…RAFENPHTST (183 aa)) lie on the Cytoplasmic side of the membrane. Residues 2–20 (AAGLATWLPFARAAAVGWL) are interaction with KCNIP1, KCNIP2, and other family members. Positions 104, 131, and 132 each coordinate Zn(2+). The tract at residues 144 to 163 (AERLAEDEEAEQAGDGPALP) is disordered. Residues 184-205 (AALVFYYVTGFFIAVSVIANVV) form a helical membrane-spanning segment. The Extracellular segment spans residues 206 to 230 (ETIPCRGSARRSSREQPCGERFPQA). A helical membrane pass occupies residues 231-252 (FFCMDTACVLIFTGEYLLRLFA). The Cytoplasmic portion of the chain corresponds to 253–263 (APSRCRFLRSV). A helical transmembrane segment spans residues 264–284 (MSLIDVVAILPYYIGLLVPKN). Residues 285–287 (DDV) lie on the Extracellular side of the membrane. Residues 288–308 (SGAFVTLRVFRVFRIFKFSRH) traverse the membrane as a helical; Voltage-sensor segment. Residues 309-323 (SQGLRILGYTLKSCA) lie on the Cytoplasmic side of the membrane. Positions 310 to 323 (QGLRILGYTLKSCA) are S4-S5 linker. The chain crosses the membrane as a helical span at residues 324-345 (SELGFLLFSLTMAIIIFATVMF). Residues 346–359 (YAEKGTNKTNFTSI) lie on the Extracellular side of the membrane. Asparagine 352 and asparagine 355 each carry an N-linked (GlcNAc...) asparagine glycan. An intramembrane region (helical) is located at residues 360–371 (PAAFWYTIVTMT). Residues 372 to 377 (TLGYGD) carry the Selectivity filter motif. The stretch at 372–379 (TLGYGDMV) is an intramembrane region. The Extracellular segment spans residues 380–386 (PSTIAGK). The chain crosses the membrane as a helical span at residues 387–415 (IFGSICSLSGVLVIALPVPVIVSNFSRIY). The Cytoplasmic segment spans residues 416–647 (HQNQRADKRR…FPETVKISSL (232 aa)). Serine 458 is subject to Phosphoserine. Positions 474-489 (FEQQHHHLLHCLEKTT) are required for dendritic targeting. Residues 506-524 (VSPGGRTSRSTSVSSQPVG) show a composition bias toward low complexity. Residues 506–531 (VSPGGRTSRSTSVSSQPVGPGSLLSS) are disordered. Phosphoserine is present on serine 555. Residues 601–634 (IPTPPANTPDESQPSSPGGGGRAGSTLRNSSLGT) form a disordered region.

The protein belongs to the potassium channel family. D (Shal) (TC 1.A.1.2) subfamily. Kv4.1/KCND1 sub-subfamily. As to quaternary structure, component of heteromultimeric potassium channels. Identified in potassium channel complexes containing KCND1, KCND2, KCND3, KCNIP1, KCNIP2, KCNIP3, KCNIP4, DPP6 and DPP10. As to expression, widely expressed. Highly expressed in brain, in particular in cerebellum and thalamus; detected at lower levels in the other parts of the brain.

The protein resides in the cell membrane. It catalyses the reaction K(+)(in) = K(+)(out). Its function is as follows. A-type voltage-gated potassium channel that mediates transmembrane potassium transport in excitable membranes in the brain. Mediates A-type current I(SA) in suprachiasmatic nucleus (SCN) neurons. Exhibits a low-threshold A-type current with a hyperpolarized steady-state inactivation midpoint and the recovery process was steeply voltage-dependent, with recovery being markedly faster at more negative potentials. May regulates repetitive firing rates in the suprachiasmatic nucleus (SCN) neurons and circadian rhythms in neuronal excitability and behavior. Contributes to the regulation of the circadian rhythm of action potential firing in suprachiasmatic nucleus neurons, which regulates the circadian rhythm of locomotor activity. The regulatory subunit KCNIP1 modulates the kinetics of channel inactivation, increases the current amplitudes and accelerates recovery from inactivation, shifts activation in a depolarizing direction. The regulatory subunit DPP10 decreases the voltage sensitivity of the inactivation channel gating. The chain is A-type voltage-gated potassium channel KCND1 from Homo sapiens (Human).